A 126-amino-acid polypeptide reads, in one-letter code: Holo-[acyl-carrier-protein] synthase (126 aa).

The Mg(2+) site is built by D9 and E58.

Belongs to the P-Pant transferase superfamily. AcpS family. It depends on Mg(2+) as a cofactor.

Its subcellular location is the cytoplasm. It catalyses the reaction apo-[ACP] + CoA = holo-[ACP] + adenosine 3',5'-bisphosphate + H(+). In terms of biological role, transfers the 4'-phosphopantetheine moiety from coenzyme A to a Ser of acyl-carrier-protein. In Escherichia coli O17:K52:H18 (strain UMN026 / ExPEC), this protein is Holo-[acyl-carrier-protein] synthase.